We begin with the raw amino-acid sequence, 559 residues long: Hepatocyte nuclear factor 1-beta-A (559 aa).

Residues 1 to 35 (MFANMVSKLTSLQQELLSALLDSGVTKDVLLQALE) are dimerization. Residues 5–36 (MVSKLTSLQQELLSALLDSGVTKDVLLQALED) form the HNF-p1 domain. Residues 53–98 (MSPSGSKLSDTDSKPVFHTLTNGHSKGKLSGDEGSEDGDDYDTPPI) form a disordered region. The segment covering 85 to 94 (EGSEDGDDYD) has biased composition (acidic residues). Positions 100–195 (KELQSQNTEE…ILRQFNQATQ (96 aa)) constitute a POU-specific atypical domain. Residues 240 to 320 (LRRNRFKWGP…NRRKEEAFRQ (81 aa)) constitute a DNA-binding region (homeobox; HNF1-type). Low complexity-rich tracts occupy residues 334-354 (LNSLLSHSSPHHPQTSSSPPS) and 370-381 (TSSTTINHHSSN). The disordered stretch occupies residues 334 to 384 (LNSLLSHSSPHHPQTSSSPPSKMQGVRYSQQGPGEVTSSTTINHHSSNAMS).

It belongs to the HNF1 homeobox family. In terms of assembly, binds DNA as a dimer. Can form homodimer or heterodimer with HNF1-alpha. As to expression, during embryonic development, expressed dynamically in the developing hindbrain, kidney (pronephros), gut, liver and pancreas; expressed in both intermediate mesoderm (precursor to the kidney) and the caudal hindbrain (including rhombomeres r5 and r6) at 10 hpf with expression diminishing caudally by 14 hpf. Strongly expressed in adult kidney, gut, liver and swim bladder; weakly expressed in brain, eye, testis, ovary and heart.

The protein resides in the nucleus. In terms of biological role, transcription factor that binds to the inverted palindrome 5'-GTTAATNATTAAC-3'. Required for induction of rhombomere r5/r6 gene expression in the hindbrain. This Danio rerio (Zebrafish) protein is Hepatocyte nuclear factor 1-beta-A (hnf1ba).